A 102-amino-acid polypeptide reads, in one-letter code: Small ribosomal subunit protein uS10 (102 aa).

This sequence belongs to the universal ribosomal protein uS10 family. Part of the 30S ribosomal subunit.

Functionally, involved in the binding of tRNA to the ribosomes. This chain is Small ribosomal subunit protein uS10, found in Sulfolobus acidocaldarius (strain ATCC 33909 / DSM 639 / JCM 8929 / NBRC 15157 / NCIMB 11770).